The primary structure comprises 120 residues: Protein EPIDERMAL PATTERNING FACTOR 2 (120 aa).

The signal sequence occupies residues Met-1–Ser-25. Disulfide bonds link Cys-76/Cys-107, Cys-80/Cys-86, Cys-83/Cys-109, and Cys-95/Cys-101.

It belongs to the plant cysteine rich small secretory peptide family. Epidermal patterning factor subfamily. Interacts with ERECTA, ERL1 and TMM. As to expression, expressed in leaves, especially by the MMCs and their early descendants cells (stomatal lineage cells) including guard mother cells (GMCs).

It localises to the secreted. Controls stomatal patterning. Regulates the number of cells that enter, and remain in, the stomatal lineage by inhibiting protodermal cells from adopting the meristemoid mother cell (MMC) fate in a non-cell-autonomous manner. Mediates stomatal development inhibition. MEPF2: mobile signal controlling stomatal development in a non-cell-autonomous manner. Uses ERECTA as major receptor. Inactivated by cleavage by CRSP (AC Q9LNU1). May act by competing with somatogen (AC Q9SV72) for the same receptor, TMM (AC Q9SSD1). The protein is Protein EPIDERMAL PATTERNING FACTOR 2 of Arabidopsis thaliana (Mouse-ear cress).